We begin with the raw amino-acid sequence, 97 residues long: Mitochondrial import inner membrane translocase subunit Tim8 A (97 aa).

The Twin CX3C motif motif lies at 43 to 66; that stretch reads CWEKCMDKPGPKLDSRAEACFVNC. Intrachain disulfides connect C43-C66 and C47-C62. Residues S57, S87, S94, and S96 each carry the phosphoserine modification.

It belongs to the small Tim family. Heterohexamer; composed of 3 copies of TIMM8A and 3 copies of TIMM13, named soluble 70 kDa complex. Associates with the TIM22 complex, whose core is composed of TIMM22.

The protein localises to the mitochondrion inner membrane. Mitochondrial intermembrane chaperone that participates in the import and insertion of some multi-pass transmembrane proteins into the mitochondrial inner membrane. Also required for the transfer of beta-barrel precursors from the TOM complex to the sorting and assembly machinery (SAM complex) of the outer membrane. Acts as a chaperone-like protein that protects the hydrophobic precursors from aggregation and guide them through the mitochondrial intermembrane space. The TIMM8-TIMM13 complex mediates the import of proteins such as TIMM23, SLC25A12/ARALAR1 and SLC25A13/ARALAR2, while the predominant TIMM9-TIMM10 70 kDa complex mediates the import of much more proteins. The polypeptide is Mitochondrial import inner membrane translocase subunit Tim8 A (Timm8a) (Rattus norvegicus (Rat)).